The chain runs to 658 residues: L-type lectin-domain containing receptor kinase V.4 (658 aa).

A signal peptide spans 1 to 25; that stretch reads MSRTIGSRVIFLILALFCCTENSRG. Residues 26 to 248 form a legume-lectin like region; sequence KLVMQGSAGF…RAMHYMLSWF (223 aa). Residues 26–280 are Extracellular-facing; the sequence is KLVMQGSAGF…EKSLVYRIVL (255 aa). Residues N66 and N196 are each glycosylated (N-linked (GlcNAc...) asparagine). Residues 281 to 301 traverse the membrane as a helical segment; the sequence is VTSLALVLFVALVASALSIFF. Over 302–658 the chain is Cytoplasmic; it reads YRRHKKVKEV…LTEPFTSRGR (357 aa). The Protein kinase domain occupies 334-592; sequence KGFKQLLGKG…LGVLCSHQAV (259 aa). ATP is bound by residues 340-348 and K363; that span reads LGKGGFGQV. Catalysis depends on D460, which acts as the Proton acceptor.

The protein in the C-terminal section; belongs to the protein kinase superfamily. Ser/Thr protein kinase family. It in the N-terminal section; belongs to the leguminous lectin family.

The protein resides in the cell membrane. It carries out the reaction L-seryl-[protein] + ATP = O-phospho-L-seryl-[protein] + ADP + H(+). The catalysed reaction is L-threonyl-[protein] + ATP = O-phospho-L-threonyl-[protein] + ADP + H(+). Functionally, involved in resistance response to the pathogenic oomycetes Phytophthora infestans and Phytophthora capsici and to the pathogenic bacteria Pseudomonas syringae. The protein is L-type lectin-domain containing receptor kinase V.4 of Arabidopsis thaliana (Mouse-ear cress).